Consider the following 411-residue polypeptide: F-box protein At4g19940 (411 aa).

Residues 29–75 (RQPIPEIPFDLVIEILTRLPAKSLMRFKSVSKLWSSLICSRNFTNRL) enclose the F-box domain.

The polypeptide is F-box protein At4g19940 (Arabidopsis thaliana (Mouse-ear cress)).